Here is a 367-residue protein sequence, read N- to C-terminus: Chorismate synthase (367 aa).

R48 serves as a coordination point for NADP(+). Residues 125–127 (RSS), 238–239 (NA), G278, 293–297 (KPTSS), and R319 contribute to the FMN site.

It belongs to the chorismate synthase family. As to quaternary structure, homotetramer. The cofactor is FMNH2.

The catalysed reaction is 5-O-(1-carboxyvinyl)-3-phosphoshikimate = chorismate + phosphate. Its pathway is metabolic intermediate biosynthesis; chorismate biosynthesis; chorismate from D-erythrose 4-phosphate and phosphoenolpyruvate: step 7/7. Functionally, catalyzes the anti-1,4-elimination of the C-3 phosphate and the C-6 proR hydrogen from 5-enolpyruvylshikimate-3-phosphate (EPSP) to yield chorismate, which is the branch point compound that serves as the starting substrate for the three terminal pathways of aromatic amino acid biosynthesis. This reaction introduces a second double bond into the aromatic ring system. In Halorhodospira halophila (strain DSM 244 / SL1) (Ectothiorhodospira halophila (strain DSM 244 / SL1)), this protein is Chorismate synthase.